A 463-amino-acid chain; its full sequence is RuvB-like 2 (463 aa).

An ATP-binding site is contributed by 77 to 84 (GQPGTGKT).

It belongs to the RuvB family. As to quaternary structure, forms homohexameric rings. Can form a dodecamer with ruvbl1 made of two stacked hexameric rings. Component of the chromatin-remodeling Ino80 complex. Component of some MLL1/MLL complex.

The protein resides in the nucleus. The protein localises to the dynein axonemal particle. The catalysed reaction is ATP + H2O = ADP + phosphate + H(+). Its function is as follows. Has double-stranded DNA-stimulated ATPase activity. Has ATP-dependent DNA helicase (5' to 3') activity suggesting a role in nuclear processes such as recombination and transcription. Represses gene activation mediated by beta-catenin. Proposed core component of the chromatin remodeling Ino80 complex which exhibits DNA- and nucleosome-activated ATPase activity and catalyzes ATP-dependent nucleosome sliding. Involved in the endoplasmic reticulum (ER)-associated degradation (ERAD) pathway where it negatively regulates expression of ER stress response genes. May act as a regulator of embryonic heart growth. The chain is RuvB-like 2 (ruvbl2) from Danio rerio (Zebrafish).